The sequence spans 78 residues: Putative defensin-like protein 133 (78 aa).

Positions 1–24 (MKRSFLLLLTILTIFIILGQGVMG) are cleaved as a signal peptide. 4 disulfides stabilise this stretch: Cys34/Cys75, Cys44/Cys68, Cys49/Cys72, and Cys53/Cys74.

This sequence belongs to the DEFL family.

The protein localises to the secreted. This Arabidopsis thaliana (Mouse-ear cress) protein is Putative defensin-like protein 133 (LCR33).